The following is a 632-amino-acid chain: 1-deoxy-D-xylulose-5-phosphate synthase (632 aa).

Thiamine diphosphate-binding positions include His-79 and 120 to 122; that span reads GHA. A Mg(2+)-binding site is contributed by Asp-152. Residues 153 to 154, Asn-181, Phe-293, and Glu-377 each bind thiamine diphosphate; that span reads GA. Asn-181 serves as a coordination point for Mg(2+).

It belongs to the transketolase family. DXPS subfamily. Homodimer. Requires Mg(2+) as cofactor. It depends on thiamine diphosphate as a cofactor.

It carries out the reaction D-glyceraldehyde 3-phosphate + pyruvate + H(+) = 1-deoxy-D-xylulose 5-phosphate + CO2. Its pathway is metabolic intermediate biosynthesis; 1-deoxy-D-xylulose 5-phosphate biosynthesis; 1-deoxy-D-xylulose 5-phosphate from D-glyceraldehyde 3-phosphate and pyruvate: step 1/1. In terms of biological role, catalyzes the acyloin condensation reaction between C atoms 2 and 3 of pyruvate and glyceraldehyde 3-phosphate to yield 1-deoxy-D-xylulose-5-phosphate (DXP). The protein is 1-deoxy-D-xylulose-5-phosphate synthase of Parabacteroides distasonis (strain ATCC 8503 / DSM 20701 / CIP 104284 / JCM 5825 / NCTC 11152).